A 158-amino-acid chain; its full sequence is 6,7-dimethyl-8-ribityllumazine synthase (158 aa).

5-amino-6-(D-ribitylamino)uracil contacts are provided by residues phenylalanine 24, 62–64, and 86–88; these read CFE and AVI. A (2S)-2-hydroxy-3-oxobutyl phosphate-binding site is contributed by 91 to 92; sequence DT. Histidine 94 acts as the Proton donor in catalysis. Phenylalanine 119 provides a ligand contact to 5-amino-6-(D-ribitylamino)uracil. Arginine 133 serves as a coordination point for (2S)-2-hydroxy-3-oxobutyl phosphate.

This sequence belongs to the DMRL synthase family.

The catalysed reaction is (2S)-2-hydroxy-3-oxobutyl phosphate + 5-amino-6-(D-ribitylamino)uracil = 6,7-dimethyl-8-(1-D-ribityl)lumazine + phosphate + 2 H2O + H(+). It functions in the pathway cofactor biosynthesis; riboflavin biosynthesis; riboflavin from 2-hydroxy-3-oxobutyl phosphate and 5-amino-6-(D-ribitylamino)uracil: step 1/2. Its function is as follows. Catalyzes the formation of 6,7-dimethyl-8-ribityllumazine by condensation of 5-amino-6-(D-ribitylamino)uracil with 3,4-dihydroxy-2-butanone 4-phosphate. This is the penultimate step in the biosynthesis of riboflavin. In Picosynechococcus sp. (strain ATCC 27264 / PCC 7002 / PR-6) (Agmenellum quadruplicatum), this protein is 6,7-dimethyl-8-ribityllumazine synthase.